Consider the following 316-residue polypeptide: Malate dehydrogenase 2 (316 aa).

NAD(+) contacts are provided by residues 10–15 (GGGQIG) and D34. Positions 83 and 89 each coordinate substrate. NAD(+)-binding positions include N96 and 119-121 (ISN). Substrate-binding residues include N121 and R152. H176 acts as the Proton acceptor in catalysis.

It belongs to the LDH/MDH superfamily. MDH type 3 family.

It catalyses the reaction (S)-malate + NAD(+) = oxaloacetate + NADH + H(+). Functionally, catalyzes the reversible oxidation of malate to oxaloacetate. The protein is Malate dehydrogenase 2 of Anaeromyxobacter dehalogenans (strain 2CP-C).